We begin with the raw amino-acid sequence, 253 residues long: MNEQGKAINSSAESRIQLESSWKAHVGNWLLRPEMRDLSSFLRARKVAGVSVYPPGSQIFAAFEATPFQRVKAVILGQDPYHGQGQAHGLCFSVRPGMPLPPSLLNIYKELEEDLGLLRPDHGCLLPWAKRGVLLLNAVLTVEDGRAGAHQGKGWEGFTDHVVDTLNREREGLVFMLWGSYAQAKGKAIDTRRHLVLKAPHPSPLSAHRGFLGCRHFSLCNQYLSQHGLGMVDWSLPPCIALDGAILNGRIAV.

The active-site Proton acceptor is D79.

It belongs to the uracil-DNA glycosylase (UDG) superfamily. UNG family.

Its subcellular location is the cytoplasm. It catalyses the reaction Hydrolyzes single-stranded DNA or mismatched double-stranded DNA and polynucleotides, releasing free uracil.. Functionally, excises uracil residues from the DNA which can arise as a result of misincorporation of dUMP residues by DNA polymerase or due to deamination of cytosine. This Xylella fastidiosa (strain M23) protein is Uracil-DNA glycosylase.